The following is a 294-amino-acid chain: 4-hydroxy-tetrahydrodipicolinate synthase (294 aa).

Pyruvate is bound at residue threonine 44. Tyrosine 132 serves as the catalytic Proton donor/acceptor. Lysine 160 (schiff-base intermediate with substrate) is an active-site residue. Valine 202 provides a ligand contact to pyruvate.

The protein belongs to the DapA family. As to quaternary structure, homotetramer; dimer of dimers.

The protein resides in the cytoplasm. It carries out the reaction L-aspartate 4-semialdehyde + pyruvate = (2S,4S)-4-hydroxy-2,3,4,5-tetrahydrodipicolinate + H2O + H(+). It functions in the pathway amino-acid biosynthesis; L-lysine biosynthesis via DAP pathway; (S)-tetrahydrodipicolinate from L-aspartate: step 3/4. Its function is as follows. Catalyzes the condensation of (S)-aspartate-beta-semialdehyde [(S)-ASA] and pyruvate to 4-hydroxy-tetrahydrodipicolinate (HTPA). The chain is 4-hydroxy-tetrahydrodipicolinate synthase from Leptospira biflexa serovar Patoc (strain Patoc 1 / Ames).